A 278-amino-acid chain; its full sequence is Octanoyltransferase LipM (278 aa).

In terms of domain architecture, BPL/LPL catalytic spans 33-248 (KKMPPTIRFY…GFEKGLDVEL (216 aa)). Cys150 acts as the Acyl-thioester intermediate in catalysis.

Belongs to the octanoyltransferase LipM family. As to quaternary structure, monomer.

The enzyme catalyses octanoyl-[ACP] + L-lysyl-[protein] = N(6)-octanoyl-L-lysyl-[protein] + holo-[ACP] + H(+). It functions in the pathway protein modification; protein lipoylation via endogenous pathway; protein N(6)-(lipoyl)lysine from octanoyl-[acyl-carrier-protein]. Functionally, catalyzes the transfer of endogenously produced octanoic acid from octanoyl-acyl-carrier-protein onto the lipoyl domain of GcvH, an intermediate carrier during protein lipoylation. The chain is Octanoyltransferase LipM from Bacillus cereus (strain ATCC 14579 / DSM 31 / CCUG 7414 / JCM 2152 / NBRC 15305 / NCIMB 9373 / NCTC 2599 / NRRL B-3711).